A 688-amino-acid chain; its full sequence is Sialic acid-binding Ig-like lectin 10 (688 aa).

A signal peptide spans 1-17; that stretch reads MSLLLFLLSFLLDGPQG. The Extracellular portion of the chain corresponds to 18–543; sequence QMESYFLQVQ…DKDSATAFSK (526 aa). The 113-residue stretch at 26–138 folds into the Ig-like V-type domain; sequence VQRIVKAQEG…SFKEEFRLQV (113 aa). 3 disulfide bridges follow: Cys-37/Cys-172, Cys-42/Cys-102, and Cys-163/Cys-214. Residue Arg-120 participates in N-acetylneuraminate binding. In terms of domain architecture, Ig-like C2-type 1 spans 145–228; that stretch reads PDIFIPEVLE…SRMSTQRTVR (84 aa). Residues Asn-195 and Asn-246 are each glycosylated (N-linked (GlcNAc...) asparagine). Ig-like C2-type domains follow at residues 250–334 and 339–436; these read PDLH…LDLS and PQDL…LSLS. Cystine bridges form between Cys-271/Cys-318 and Cys-375/Cys-420. The helical transmembrane segment at 544 to 564 threads the bilayer; the sequence is GAVLGFGITALLALCLIVVIV. Over 565–688 the chain is Cytoplasmic; the sequence is KTLQKKGTQE…YSDYTEVRVH (124 aa). Residues 588 to 593 carry the ITIM motif 1 motif; it reads LDYINV. Residues 602 to 656 are disordered; that stretch reads RNWKAEPDAPSRSSPLDTHFPKPKKKQKDPHFTYPGCPDPTSSSQVPVSENNPEE. A compositionally biased stretch (polar residues) spans 641 to 652; the sequence is PTSSSQVPVSEN. An ITIM motif 2 motif is present at residues 657-662; sequence LHYAAL. Tyr-659 carries the phosphotyrosine modification.

Belongs to the immunoglobulin superfamily. SIGLEC (sialic acid binding Ig-like lectin) family. Interacts with PTPN6/SHP-1 upon phosphorylation. Interacts with NCF1. Interacts with CD24; the probable CD24:SIGLEC10 complex is proposed to inhibit HGMB1-mediated tissue damage immune response. Interacts with HMGB1; the interaction is dependent on CD24. Associates with membrane IgM on the B cell surface. Interacts with RIGI, CBL and PTPN11. Phosphorylation of Tyr-659 is involved in binding to PTPN6. Expressed in B cells with high levels in pre-B cells and B1a cells of the peritoneal cavity.

It localises to the cell membrane. Functionally, putative adhesion molecule that mediates sialic-acid dependent binding to cells. Preferentially binds to alpha-2,3- or alpha-2,6-linked sialic acid. The sialic acid recognition site may be masked by cis interactions with sialic acids on the same cell surface. In the immune response, seems to act as an inhibitory receptor upon ligand induced tyrosine phosphorylation by recruiting cytoplasmic phosphatase(s) via their SH2 domain(s) that block signal transduction through dephosphorylation of signaling molecules. Involved in negative regulation of B-cell antigen receptor signaling and specifically acts on B1 cells to inhibit Ca(2+) signaling, cellular expansion and antibody secretion. The inhibition of B cell activation is dependent on PTPN6/SHP-1. In association with CD24 may be involved in the selective suppression of the immune response to danger-associated molecular patterns (DAMPs) such as HMGB1, HSP70 and HSP90. In association with CD24 may regulate the immune repsonse of natural killer (NK) cells. Plays a role in the control of autoimmunity. During initiation of adaptive immune responses by CD8-alpha(+) dendritic cells inhibits cross-presentation by impairing the formation of MHC class I-peptide complexes. The function seems to implicate recruitment of PTPN6/SHP-1, which dephosphorylates NCF1 of the NADPH oxidase complex consequently promoting phagosomal acidification. In terms of biological role, (Microbial infection) During infection by RNA viruses inhibits RIG-I signaling in macrophages by promoting its CBL-dependent ubiquitination and degradation via PTPN11/SHP-2. The polypeptide is Sialic acid-binding Ig-like lectin 10 (Siglec10) (Mus musculus (Mouse)).